The chain runs to 320 residues: MVGKSVITLDDLSIRQIQEMLHKAQYIDSHRKEVAHTCEGRVLATLFYEPSTRTRLSFETAMLRLGGKVIGFAGAQLASVTKGETIADTLKTVSNYVDVVAIRHPKEGAALVASRAASVPVINAGDGGHMHPTQTLADLATLQSRFGRVTNLTVGLCGDLTFGRTVHSLIETLCRFGNVNFVLISPDELKTPQYVLDRINATESCSYTEVKDLVSVIGDLDVLYMTRVQKERFFNEDDYLRLRDTYILDEAKMAYAKKDMAVLHPLPRVNEIAVEVDDDPRAAYFEQVKNGMLMRMALESSVVGDELPGYEPLAAKEVEA.

The carbamoyl phosphate site is built by Arg53 and Thr54. Residue Lys82 coordinates L-aspartate. Carbamoyl phosphate-binding residues include Arg103, His131, and Gln134. Positions 164 and 227 each coordinate L-aspartate. Residues Leu266 and Pro267 each contribute to the carbamoyl phosphate site.

Belongs to the aspartate/ornithine carbamoyltransferase superfamily. ATCase family. As to quaternary structure, heterododecamer (2C3:3R2) of six catalytic PyrB chains organized as two trimers (C3), and six regulatory PyrI chains organized as three dimers (R2).

The enzyme catalyses carbamoyl phosphate + L-aspartate = N-carbamoyl-L-aspartate + phosphate + H(+). The protein operates within pyrimidine metabolism; UMP biosynthesis via de novo pathway; (S)-dihydroorotate from bicarbonate: step 2/3. Catalyzes the condensation of carbamoyl phosphate and aspartate to form carbamoyl aspartate and inorganic phosphate, the committed step in the de novo pyrimidine nucleotide biosynthesis pathway. This chain is Aspartate carbamoyltransferase catalytic subunit, found in Bifidobacterium adolescentis (strain ATCC 15703 / DSM 20083 / NCTC 11814 / E194a).